Here is a 537-residue protein sequence, read N- to C-terminus: Fusion glycoprotein F0 (537 aa).

The first 21 residues, 1 to 21, serve as a signal peptide directing secretion; it reads MIPGRIFLVLLVIFNTKPIHP. Residues 26 to 486 are Extracellular-facing; that stretch reads EKYYESTCSV…DLSENRENKN (461 aa). Cystine bridges form between Cys-33–Cys-402, Cys-65–Cys-177, Cys-278–Cys-306, Cys-287–Cys-296, Cys-321–Cys-330, Cys-345–Cys-356, and Cys-379–Cys-385. Residues 102–122 are fusion peptide; the sequence is FLGLILGLGAAVTAGVALAKT. The stretch at 120–174 forms a coiled coil; that stretch reads AKTVQLESEIALIRDAVRNTNEAVVSLTNGMSVLAKVVDDLKNFISKELLPKINR. Positions 444–479 form a coiled coil; the sequence is LSFPDDKFDVAIRDVEHSINQTRTFFKASDQLLDLS. N-linked (GlcNAc...) asparagine; by host glycosylation occurs at Asn-463. Residues 487–515 form a helical membrane-spanning segment; it reads LNKSYILTTLLFVVMLIIIMAVIGFILYK. At 516–537 the chain is on the cytoplasmic side; the sequence is VLKMIRDNKLKSKSTPGLTVLS.

This sequence belongs to the paramyxoviruses fusion glycoprotein family. As to quaternary structure, homotrimer. Heterodimer with fusion protein F2; disulfide-linked. Part of a complex composed of F1, F2 and G glycoproteins. In terms of assembly, homotrimer. Heterodimer with fusion protein F1; disulfide-linked. Part of a complex composed of F1, F2 and G glycoproteins. In terms of processing, the F glycoprotein is synthesized as a F0 inactive precursor that is heavily N-glycosylated and processed by a host furin-like protease probably in the Golgi.

The protein localises to the host Golgi apparatus membrane. Its subcellular location is the virion membrane. It localises to the host cell membrane. Its function is as follows. Inactive precursor that is cleaved by a furin-like protease to give rise to the mature F1 and F2 fusion glycoproteins. Functionally, class I viral fusion protein. Under the current model, the protein has at least 3 conformational states: pre-fusion native state, pre-hairpin intermediate state, and post-fusion hairpin state. During viral and plasma cell membrane fusion, the coiled coil regions assume a trimer-of-hairpins structure, positioning the fusion peptide in close proximity to the C-terminal region of the ectodomain. The formation of this structure appears to drive apposition and subsequent fusion of viral and cellular membranes leading to delivery of the nucleocapsid into the cytoplasm. This fusion is pH independent and occurs at the plasma or endosomal membrane. The trimer of F1-F2 (F protein) also facilitates the attachment and entry into the host cell. Later in infection, F protein expressed at the plasma membrane of infected cells can mediate fusion with adjacent cells to form syncytia, a cytopathic effect that could lead to tissue necrosis. Major determinant of the species specificity of RSV infection. The trimer of F1-F2 (F protein) also facilitates the attachment and entry into the host cell. Later in infection, F protein expressed at the plasma membrane of infected cells can mediate fusion with adjacent cells to form syncytia, a cytopathic effect that could lead to tissue necrosis. The polypeptide is Fusion glycoprotein F0 (F) (Mus musculus (Mouse)).